We begin with the raw amino-acid sequence, 338 residues long: Glycerol-3-phosphate dehydrogenase [NAD(P)+] (338 aa).

Residues Ser13, Trp14, and Lys108 each coordinate NADPH. Positions 108, 139, and 141 each coordinate sn-glycerol 3-phosphate. Ala143 contacts NADPH. Sn-glycerol 3-phosphate is bound by residues Lys194, Asp247, Ser257, Arg258, and Asn259. The Proton acceptor role is filled by Lys194. Arg258 contributes to the NADPH binding site. The NADPH site is built by Val282 and Glu284.

It belongs to the NAD-dependent glycerol-3-phosphate dehydrogenase family.

The protein resides in the cytoplasm. It catalyses the reaction sn-glycerol 3-phosphate + NAD(+) = dihydroxyacetone phosphate + NADH + H(+). It carries out the reaction sn-glycerol 3-phosphate + NADP(+) = dihydroxyacetone phosphate + NADPH + H(+). It functions in the pathway membrane lipid metabolism; glycerophospholipid metabolism. Functionally, catalyzes the reduction of the glycolytic intermediate dihydroxyacetone phosphate (DHAP) to sn-glycerol 3-phosphate (G3P), the key precursor for phospholipid synthesis. In Streptococcus pneumoniae (strain Hungary19A-6), this protein is Glycerol-3-phosphate dehydrogenase [NAD(P)+].